We begin with the raw amino-acid sequence, 771 residues long: DNA helicase/primase complex-associated protein (771 aa).

The protein belongs to the herpesviridae HEPA family. Associates with the primase and the helicase to form the helicase-primase complex. Interacts with the origin-binding protein. Interacts with the polymerase catalytic subunit.

It is found in the host nucleus. In terms of biological role, component of the helicase/primase complex. Unwinds the DNA at the replication forks and generates single-stranded DNA for both leading and lagging strand synthesis. The primase synthesizes short RNA primers on the lagging strand that the polymerase presumably elongates using dNTPs. The primase-associated factor has no known catalytic activity in the complex and may serve to facilitate the formation of the replisome by directly interacting with the origin-binding protein and the polymerase. This is DNA helicase/primase complex-associated protein from Varicella-zoster virus (strain Oka vaccine) (HHV-3).